Reading from the N-terminus, the 219-residue chain is Histone H1.4 (219 aa).

Residues 1 to 15 (MSETAPAAPAAPAPA) show a composition bias toward low complexity. Residues 1 to 41 (MSETAPAAPAAPAPAEKTPVKKKARKSAGAAKRKASGPPVS) form a disordered region. An N-acetylserine modification is found at S2. Position 2 is a phosphoserine (S2). The residue at position 17 (K17) is an N6-acetyllysine. Residue T18 is modified to Phosphothreonine. A compositionally biased stretch (basic residues) spans 20–35 (VKKKARKSAGAAKRKA). Residue K26 is modified to N6-acetyllysine; alternate. The residue at position 26 (K26) is an N6-methyllysine; alternate. K34 carries the N6-(beta-hydroxybutyryl)lysine; alternate modification. K34 is modified (N6-succinyllysine; alternate). S36 is modified (phosphoserine). In terms of domain architecture, H15 spans 36 to 109 (SGPPVSELIT…GASGSFKLNK (74 aa)). At K52 the chain carries N6-(beta-hydroxybutyryl)lysine. Position 54 is a citrulline (R54). 4 positions are modified to N6-(beta-hydroxybutyryl)lysine: K64, K85, K90, and K106. The segment at 91–219 (GTLVQTKGTG…KPKKAPAKKK (129 aa)) is disordered. Over residues 119-140 (KPKKAGAAKPKKPAGAAKKPKK) the composition is skewed to basic residues. At T146 the chain carries Phosphothreonine. Composition is skewed to basic residues over residues 149–160 (KGAKKTPKKAKK) and 168–185 (KKAK…KKAP). S187 is modified (phosphoserine). Basic residues predominate over residues 192 to 219 (KAVKPKAAKPKAAKPKTAKPKKAPAKKK).

This sequence belongs to the histone H1/H5 family. In terms of processing, H1 histones are progressively phosphorylated during the cell cycle, becoming maximally phosphorylated during late G2 phase and M phase, and being dephosphorylated sharply thereafter. Post-translationally, acetylated at Lys-26. Deacetylated at Lys-26 by SIRT1. Citrullination at Arg-54 (H1R54ci) by PADI4 takes place within the DNA-binding site of H1 and results in its displacement from chromatin and global chromatin decondensation, thereby promoting pluripotency and stem cell maintenance.

Its subcellular location is the nucleus. It localises to the chromosome. In terms of biological role, histone H1 protein binds to linker DNA between nucleosomes forming the macromolecular structure known as the chromatin fiber. Histones H1 are necessary for the condensation of nucleosome chains into higher-order structured fibers. Also acts as a regulator of individual gene transcription through chromatin remodeling, nucleosome spacing and DNA methylation. In Oryctolagus cuniculus (Rabbit), this protein is Histone H1.4.